Consider the following 375-residue polypeptide: Succinyl-diaminopimelate desuccinylase (375 aa).

Zn(2+) is bound at residue H66. D68 is a catalytic residue. D99 contributes to the Zn(2+) binding site. E133 functions as the Proton acceptor in the catalytic mechanism. Zn(2+) is bound by residues E134, E162, and H348.

Belongs to the peptidase M20A family. DapE subfamily. As to quaternary structure, homodimer. The cofactor is Zn(2+). Co(2+) is required as a cofactor.

It carries out the reaction N-succinyl-(2S,6S)-2,6-diaminopimelate + H2O = (2S,6S)-2,6-diaminopimelate + succinate. It participates in amino-acid biosynthesis; L-lysine biosynthesis via DAP pathway; LL-2,6-diaminopimelate from (S)-tetrahydrodipicolinate (succinylase route): step 3/3. In terms of biological role, catalyzes the hydrolysis of N-succinyl-L,L-diaminopimelic acid (SDAP), forming succinate and LL-2,6-diaminopimelate (DAP), an intermediate involved in the bacterial biosynthesis of lysine and meso-diaminopimelic acid, an essential component of bacterial cell walls. The polypeptide is Succinyl-diaminopimelate desuccinylase (Escherichia coli O1:K1 / APEC).